A 345-amino-acid polypeptide reads, in one-letter code: UPF0228 protein MA_2656 (345 aa).

Belongs to the UPF0228 family.

This is UPF0228 protein MA_2656 from Methanosarcina acetivorans (strain ATCC 35395 / DSM 2834 / JCM 12185 / C2A).